The primary structure comprises 500 residues: GTPase Der (500 aa).

EngA-type G domains follow at residues 3–166 and 211–384; these read PVVA…MEEL and IKLA…VSAT. GTP is bound by residues 9–16, 56–60, 118–121, 217–224, 264–268, and 329–332; these read GRPNVGKS, DTGGI, NKID, DTAGV, and NKWD. The region spanning 385 to 469 is the KH-like domain; it reads KRVGTSVLTR…PIRIQFQNSE (85 aa). The segment at 468–500 is disordered; that stretch reads SENPFEDRGGKLTMSQERQRKRLLGAVKNRNKK. The segment covering 486 to 500 has biased composition (basic residues); that stretch reads QRKRLLGAVKNRNKK.

The protein belongs to the TRAFAC class TrmE-Era-EngA-EngB-Septin-like GTPase superfamily. EngA (Der) GTPase family. In terms of assembly, associates with the 50S ribosomal subunit.

Its function is as follows. GTPase that plays an essential role in the late steps of ribosome biogenesis. The polypeptide is GTPase Der (Aliivibrio fischeri (strain ATCC 700601 / ES114) (Vibrio fischeri)).